The chain runs to 211 residues: Agamous-like MADS-box protein AGL12 (211 aa).

Residues 3–57 (RGKIQLKRIENPVHRQVTFCKRRTGLLKKAKELSVLCDAEIGVVIFSPQGKLFEL) enclose the MADS-box domain. A K-box domain is found at 95-185 (NLDPKDEINV…LEKIEENNNS (91 aa)).

In terms of tissue distribution, preferentially expressed in roots. In root meristem, expressed in external cells of columella, lateral root cap and atrichoblasts. In mature root, expressed in the central cylinder. Expressed in leaf vasculature, young floral meristems and nectaries.

Its subcellular location is the nucleus. Probable transcription activator that regulates root development by controlling cell proliferation in root meristem. May mediate responses to auxin in the root. May act as promoter of the flowering transition through up-regulation of SOC, FT and LFY. The polypeptide is Agamous-like MADS-box protein AGL12 (Arabidopsis thaliana (Mouse-ear cress)).